Reading from the N-terminus, the 109-residue chain is Large ribosomal subunit protein eL30A (109 aa).

This sequence belongs to the eukaryotic ribosomal protein eL30 family. As to quaternary structure, component of the large ribosomal subunit (LSU). Mature yeast ribosomes consist of a small (40S) and a large (60S) subunit. The 40S small subunit contains 1 molecule of ribosomal RNA (18S rRNA) and at least 33 different proteins. The large 60S subunit contains 3 rRNA molecules (25S, 5.8S and 5S rRNA) and at least 46 different proteins.

It is found in the cytoplasm. Its function is as follows. Component of the ribosome, a large ribonucleoprotein complex responsible for the synthesis of proteins in the cell. The small ribosomal subunit (SSU) binds messenger RNAs (mRNAs) and translates the encoded message by selecting cognate aminoacyl-transfer RNA (tRNA) molecules. The large subunit (LSU) contains the ribosomal catalytic site termed the peptidyl transferase center (PTC), which catalyzes the formation of peptide bonds, thereby polymerizing the amino acids delivered by tRNAs into a polypeptide chain. The nascent polypeptides leave the ribosome through a tunnel in the LSU and interact with protein factors that function in enzymatic processing, targeting, and the membrane insertion of nascent chains at the exit of the ribosomal tunnel. This is Large ribosomal subunit protein eL30A (rpl3001) from Schizosaccharomyces pombe (strain 972 / ATCC 24843) (Fission yeast).